We begin with the raw amino-acid sequence, 108 residues long: Large ribosomal subunit protein uL24 (108 aa).

The protein belongs to the universal ribosomal protein uL24 family. In terms of assembly, part of the 50S ribosomal subunit.

One of two assembly initiator proteins, it binds directly to the 5'-end of the 23S rRNA, where it nucleates assembly of the 50S subunit. Functionally, one of the proteins that surrounds the polypeptide exit tunnel on the outside of the subunit. This chain is Large ribosomal subunit protein uL24, found in Geobacter sulfurreducens (strain ATCC 51573 / DSM 12127 / PCA).